A 2074-amino-acid chain; its full sequence is Cell adhesion molecule Dscam2 (2074 aa).

The signal sequence occupies residues 1 to 21 (MWISSRFFVILLLLNLDNTCS). Residues 22 to 1619 (EPFEAHLRGP…QTTVIFANIN (1598 aa)) lie on the Extracellular side of the membrane. Ig-like C2-type domains lie at 31–120 (PGFV…RIVS), 238–326 (PSVV…LRLT), 330–417 (PIQV…AELQ), 422–516 (PPVL…ARLN), 521–607 (PYIR…GEVT), 612–698 (PSIE…IKYT), 707–802 (PRWI…LKVN), and 805–902 (PYFS…LQVQ). 8 cysteine pairs are disulfide-bonded: cysteine 53-cysteine 109, cysteine 259-cysteine 310, cysteine 352-cysteine 400, cysteine 444-cysteine 500, cysteine 541-cysteine 590, cysteine 633-cysteine 686, cysteine 728-cysteine 783, and cysteine 826-cysteine 884. 4 consecutive Fibronectin type-III domains span residues 907–1003 (PPSV…TEPQ), 1008–1108 (PPLS…TMED), 1113–1211 (PPED…SEED), and 1215–1311 (APAD…TNRI). The Ig-like C2-type 9 domain maps to 1312 to 1400 (PARIISFGGP…DRLTHTLIVQ (89 aa)). Cysteine 1334 and cysteine 1382 are oxidised to a cystine. Fibronectin type-III domains follow at residues 1402–1495 (PPTA…TQGQ) and 1496–1595 (SPGH…TKDG). A helical membrane pass occupies residues 1620–1640 (LLIPTIAAVSGMFCTIIMIIV). Topologically, residues 1641–2074 (CYRHMLKNAP…KFFTAPTLPK (434 aa)) are cytoplasmic. 4 disordered regions span residues 1739–1766 (EGCS…HQRP), 1778–1917 (PFHN…KSIS), 1936–1974 (SPSI…SLKQ), and 2011–2074 (PSSQ…TLPK). Over residues 1757-1766 (THHHHHHQRP) the composition is skewed to basic residues. A compositionally biased stretch (polar residues) spans 1831–1846 (AQSSTSSDLSPMSEQK). A compositionally biased stretch (basic residues) spans 1848–1858 (LPRRGRSRYHH). The segment covering 1859–1868 (QQYQFSTNTT) has biased composition (polar residues). Composition is skewed to low complexity over residues 1875–1903 (NKMN…SNSN), 1942–1974 (QQQK…SLKQ), and 2036–2051 (SQQS…QQHP). Polar residues predominate over residues 2055 to 2066 (LNPSTAMLSSKF).

It is found in the membrane. Its function is as follows. Cell adhesion molecule. This is Cell adhesion molecule Dscam2 (Dscam2) from Drosophila melanogaster (Fruit fly).